The chain runs to 588 residues: bZip transcription factor GAP1 (588 aa).

Positions 1-49 (MAEVDNGGAQKSSASRKKRYQELDPETRMKRVAQNRAAQKAFRERKERK) are disordered. A compositionally biased stretch (basic and acidic residues) spans 20–29 (YQELDPETRM). Positions 25-88 (PETRMKRVAQ…SILVKELRKY (64 aa)) constitute a bZIP domain. The interval 28–51 (RMKRVAQNRAAQKAFRERKERKMK) is basic motif. The tract at residues 53–60 (LERKVVDL) is leucine-zipper. Polar residues predominate over residues 164–174 (FNVTGQLTPPG). The disordered stretch occupies residues 164-219 (FNVTGQLTPPGNTSSSTTANSVAANAKKQSIPHSDSSDSNESKNTWNTDPTSSEDW). The segment covering 175 to 189 (NTSSSTTANSVAANA) has biased composition (low complexity). Transcription activation stretches follow at residues 189 to 327 (AKKQ…SNTW) and 376 to 477 (GRTQ…MQTE). Positions 190-217 (KKQSIPHSDSSDSNESKNTWNTDPTSSE) are enriched in polar residues. Positions 253–265 (CTKLNQACGTKAC) are n-CRD. Positions 487–529 (DMLNSSRMKETIDNQNIGEKTTKDDNEDDDEDDENDNTVVPSR) are disordered. Positions 511 to 522 (DNEDDDEDDEND) are enriched in acidic residues. The tract at residues 536 to 567 (CSEIWDRITAHPKYSDIDIDGLCSELMAKAKC) is c-CRD. A Nuclear export signal motif is present at residues 552–559 (IDIDGLCS).

The protein resides in the nucleus. Its function is as follows. Transcription factor that plays a critical role in response to various stresses and reduces the stress through transcriptional activation of its target genes including multidrug transporter FLR1. In Candida glabrata (strain ATCC 2001 / BCRC 20586 / JCM 3761 / NBRC 0622 / NRRL Y-65 / CBS 138) (Yeast), this protein is bZip transcription factor GAP1.